We begin with the raw amino-acid sequence, 256 residues long: Small ribosomal subunit protein uS2 (256 aa).

This sequence belongs to the universal ribosomal protein uS2 family.

This is Small ribosomal subunit protein uS2 from Methylococcus capsulatus (strain ATCC 33009 / NCIMB 11132 / Bath).